The primary structure comprises 1112 residues: Mediator of RNA polymerase II transcription subunit 14 (1112 aa).

Disordered regions lie at residues 1–76 (MPGV…INES), 120–141 (SPHG…QSPE), and 1088–1112 (TNSA…ITID). Positions 20 to 39 (SPDNVSSTPFPQERVNQSGD) are enriched in polar residues. Positions 64–73 (IETHTGKDGI) are enriched in basic and acidic residues. A compositionally biased stretch (polar residues) spans 1088–1099 (TNSAGARSSQQC).

Belongs to the Mediator complex subunit 14 family. In terms of assembly, component of the Mediator complex.

The protein resides in the nucleus. Functionally, component of the Mediator complex, a coactivator involved in the regulated transcription of nearly all RNA polymerase II-dependent genes. Mediator functions as a bridge to convey information from gene-specific regulatory proteins to the basal RNA polymerase II transcription machinery. Mediator is recruited to promoters by direct interactions with regulatory proteins and serves as a scaffold for the assembly of a functional preinitiation complex with RNA polymerase II and the general transcription factors. The sequence is that of Mediator of RNA polymerase II transcription subunit 14 (rgr1) from Aspergillus clavatus (strain ATCC 1007 / CBS 513.65 / DSM 816 / NCTC 3887 / NRRL 1 / QM 1276 / 107).